The primary structure comprises 427 residues: Flotillin-1 (427 aa).

3 positions are modified to phosphoserine: S19, S163, and S385. T387 is subject to Phosphothreonine.

This sequence belongs to the band 7/mec-2 family. Flotillin subfamily. In terms of assembly, heterooligomeric complex of flotillin-1 and flotillin-2 and caveolin-1 and caveolin-2. Interacts with ECPAS.

It is found in the cell membrane. The protein resides in the endosome. The protein localises to the membrane. Its subcellular location is the caveola. It localises to the melanosome. It is found in the membrane raft. In terms of biological role, may act as a scaffolding protein within caveolar membranes, functionally participating in formation of caveolae or caveolae-like vesicles. This Pongo abelii (Sumatran orangutan) protein is Flotillin-1 (FLOT1).